The primary structure comprises 475 residues: Ribulose bisphosphate carboxylase large chain (475 aa).

Residues 1 to 2 (MS) constitute a propeptide that is removed on maturation. Residue Pro-3 is modified to N-acetylproline. Lys-14 bears the N6,N6,N6-trimethyllysine mark. Positions 123 and 173 each coordinate substrate. The active-site Proton acceptor is the Lys-175. Lys-177 provides a ligand contact to substrate. 3 residues coordinate Mg(2+): Lys-201, Asp-203, and Glu-204. At Lys-201 the chain carries N6-carboxylysine. The Proton acceptor role is filled by His-294. 3 residues coordinate substrate: Arg-295, His-327, and Ser-379.

It belongs to the RuBisCO large chain family. Type I subfamily. In terms of assembly, heterohexadecamer of 8 large chains and 8 small chains; disulfide-linked. The disulfide link is formed within the large subunit homodimers. Mg(2+) serves as cofactor. In terms of processing, the disulfide bond which can form in the large chain dimeric partners within the hexadecamer appears to be associated with oxidative stress and protein turnover.

It is found in the plastid. Its subcellular location is the chloroplast. The catalysed reaction is 2 (2R)-3-phosphoglycerate + 2 H(+) = D-ribulose 1,5-bisphosphate + CO2 + H2O. It catalyses the reaction D-ribulose 1,5-bisphosphate + O2 = 2-phosphoglycolate + (2R)-3-phosphoglycerate + 2 H(+). In terms of biological role, ruBisCO catalyzes two reactions: the carboxylation of D-ribulose 1,5-bisphosphate, the primary event in carbon dioxide fixation, as well as the oxidative fragmentation of the pentose substrate in the photorespiration process. Both reactions occur simultaneously and in competition at the same active site. This is Ribulose bisphosphate carboxylase large chain from Magnolia acuminata (Cucumber tree).